The chain runs to 372 residues: Alanine dehydrogenase (372 aa).

The substrate site is built by R15 and K75. H96 acts as the Proton donor/acceptor in catalysis. Residues S134, 178–179, D198, S220, 239–240, 267–270, R280, and 299–302 contribute to the NAD(+) site; these read IA, VL, IAID, and VANM. The active-site Proton donor/acceptor is the D270.

Belongs to the AlaDH/PNT family. Homohexamer.

The protein resides in the cytoplasm. It carries out the reaction L-alanine + NAD(+) + H2O = pyruvate + NH4(+) + NADH + H(+). It functions in the pathway amino-acid degradation; L-alanine degradation via dehydrogenase pathway; NH(3) and pyruvate from L-alanine: step 1/1. With respect to regulation, inhibited by p-chloromercuribenzoate and HgCl(2) and by Cu(2+) and Pb(2+) salts, unaffected by amino acids such as D-alanine and beta-alanine or by nucleotides or nucleosides. In terms of biological role, catalyzes the reversible reductive amination of pyruvate to L-alanine. Prefers L-alanine for oxidative deamination, other substrates are poorly reactive. In the other direction 2-oxobutyrate is almost as reactive as pyruvate. Ammonia is the sole amino donor for the reductive amination of pyruvate, NADPH is inert. Reductive amination proceeds through a sequential, ordered ternary-binary mechanism, where NADH binds first followed by ammonia and pyruvate; the products are released in the order L-alanine and NAD(+). A key factor in the assimilation of L-alanine as an energy source via the tricarboxylic acid cycle during sporulation. In Lysinibacillus sphaericus (Bacillus sphaericus), this protein is Alanine dehydrogenase (ald).